The chain runs to 391 residues: 3-ketoacyl-CoA thiolase (391 aa).

The Acyl-thioester intermediate role is filled by Cys95. Catalysis depends on proton acceptor residues His347 and Cys377.

This sequence belongs to the thiolase-like superfamily. Thiolase family. Heterotetramer of two alpha chains (FadB) and two beta chains (FadA).

It is found in the cytoplasm. The enzyme catalyses an acyl-CoA + acetyl-CoA = a 3-oxoacyl-CoA + CoA. Its pathway is lipid metabolism; fatty acid beta-oxidation. Functionally, catalyzes the final step of fatty acid oxidation in which acetyl-CoA is released and the CoA ester of a fatty acid two carbons shorter is formed. The chain is 3-ketoacyl-CoA thiolase from Pseudomonas fluorescens (strain Pf0-1).